We begin with the raw amino-acid sequence, 541 residues long: Membrane protein insertase YidC (541 aa).

A helical membrane pass occupies residues 7-27; the sequence is ILLLALALVSFLLFQQWQVET. The span at 34–55 shows a compositional bias: polar residues; sequence TVSTVQQTHKNGDVPTSSTANS. Residues 34–59 form a disordered region; that stretch reads TVSTVQQTHKNGDVPTSSTANSDAPV. The next 4 membrane-spanning stretches (helical) occupy residues 343–363, 418–438, 456–476, and 495–515; these read SFIQ…TFIV, LGGC…YWAL, LSAQ…MFLI, and FIPV…VLYW.

It belongs to the OXA1/ALB3/YidC family. Type 1 subfamily. In terms of assembly, interacts with the Sec translocase complex via SecD. Specifically interacts with transmembrane segments of nascent integral membrane proteins during membrane integration.

It is found in the cell inner membrane. Required for the insertion and/or proper folding and/or complex formation of integral membrane proteins into the membrane. Involved in integration of membrane proteins that insert both dependently and independently of the Sec translocase complex, as well as at least some lipoproteins. Aids folding of multispanning membrane proteins. This Aliivibrio salmonicida (strain LFI1238) (Vibrio salmonicida (strain LFI1238)) protein is Membrane protein insertase YidC.